A 607-amino-acid polypeptide reads, in one-letter code: MQRSRASSTSSGRHPAPPPIGLPQPQAQPLEAPKIIVIHPGSQHLRIGRAADLNPLTLLHAVAYRRRPGASDRPHHDPLLPPLDNVNSNSGLMVEFEEQRLVVSRILQHCVVDNKNRLRVATPPQQLAHFNRSSQAEKVPAPSGQMADEPWLDREAPVLFDDRILRLGAVDARNYDIHFPIQRGELNVHNEKGGSLQASMQHLERIWSYALEERLKIPLRKLGTHCAVLVVNDVYVRRHLREFVTLLLRRLGFRRCFLVQDSVASTFGAGIGYGCVVDIGAQKTSIACIEDGISQLDARVRLSYGGGDLDQVLLLLLRKCGFPYRECNVQESYVDAHLLDELKEKFCHLNASVCGAQEKHFNLRKHNGQWLRYTIQVGDEALMAPLALFHTELLNITGRTKAVFTQQAVQDQYDCEDCFDAEYLKETGRKNGVRGGDILQLSTSAGYQPRPQLPVTADDEELIVVDQDETISNCQSQLGAQTAGGQMNSNGCYHNGQGLVLPLDQAIIQSINRLSSYETKRKMFGSILLVGSSAKLPGLAAWLEQRISQQVQSEVNVLIKGMDAGMVAWKGAAIMSVLESARELWISQNDWQRHGLRVLRERSPFLW.

The segment covering 1-12 (MQRSRASSTSSG) has biased composition (polar residues). Residues 1–27 (MQRSRASSTSSGRHPAPPPIGLPQPQA) are disordered. At threonine 9 the chain carries Phosphothreonine. The residue at position 11 (serine 11) is a Phosphoserine. 278-281 (DIGA) provides a ligand contact to ATP.

The protein belongs to the actin family. ARP8 subfamily. Component of the chromatin remodeling Ino80 complex. Exists as monomers and dimers, but the dimer is most probably the biologically relevant form required for stable interactions with histones that exploits the twofold symmetry of the nucleosome core.

It localises to the nucleus. It is found in the cytoplasm. The protein resides in the cytoskeleton. Functionally, plays an important role in the functional organization of mitotic chromosomes. Exhibits low basal ATPase activity, and unable to polymerize. Its function is as follows. Proposed core component of the chromatin remodeling INO80 complex which is involved in transcriptional regulation, DNA replication and probably DNA repair. Strongly prefer nucleosomes and H3-H4 tetramers over H2A-H2B dimers, suggesting it may act as a nucleosome recognition module within the complex. This Drosophila melanogaster (Fruit fly) protein is Actin-related protein 8 (Arp8).